The sequence spans 82 residues: Small ribosomal subunit protein bS16 (82 aa).

This sequence belongs to the bacterial ribosomal protein bS16 family.

In Actinobacillus pleuropneumoniae serotype 5b (strain L20), this protein is Small ribosomal subunit protein bS16.